The primary structure comprises 481 residues: Protein nucleotidyltransferase YdiU (481 aa).

ATP contacts are provided by G85, G87, R88, K108, D120, G121, R172, and R179. Residue D248 is the Proton acceptor of the active site. Positions 249 and 258 each coordinate Mg(2+). An ATP-binding site is contributed by D258.

Belongs to the SELO family. The cofactor is Mg(2+). It depends on Mn(2+) as a cofactor.

The enzyme catalyses L-seryl-[protein] + ATP = 3-O-(5'-adenylyl)-L-seryl-[protein] + diphosphate. It catalyses the reaction L-threonyl-[protein] + ATP = 3-O-(5'-adenylyl)-L-threonyl-[protein] + diphosphate. It carries out the reaction L-tyrosyl-[protein] + ATP = O-(5'-adenylyl)-L-tyrosyl-[protein] + diphosphate. The catalysed reaction is L-histidyl-[protein] + UTP = N(tele)-(5'-uridylyl)-L-histidyl-[protein] + diphosphate. The enzyme catalyses L-seryl-[protein] + UTP = O-(5'-uridylyl)-L-seryl-[protein] + diphosphate. It catalyses the reaction L-tyrosyl-[protein] + UTP = O-(5'-uridylyl)-L-tyrosyl-[protein] + diphosphate. In terms of biological role, nucleotidyltransferase involved in the post-translational modification of proteins. It can catalyze the addition of adenosine monophosphate (AMP) or uridine monophosphate (UMP) to a protein, resulting in modifications known as AMPylation and UMPylation. The sequence is that of Protein nucleotidyltransferase YdiU from Cereibacter sphaeroides (strain ATCC 17023 / DSM 158 / JCM 6121 / CCUG 31486 / LMG 2827 / NBRC 12203 / NCIMB 8253 / ATH 2.4.1.) (Rhodobacter sphaeroides).